The following is a 715-amino-acid chain: ATP-dependent zinc metalloprotease FtsH (715 aa).

Residues 1–10 (MKNKNRGFFR) are Cytoplasmic-facing. The chain crosses the membrane as a helical span at residues 11–31 (SSLSYAFVILAVIFLIYSFFG). Residues 32 to 137 (RSDGSVKHLS…KPAASNFWGS (106 aa)) are Extracellular-facing. A helical membrane pass occupies residues 138–158 (MLTLILPTLIMFALLYWMLIG). Residues 159-715 (SQRGQGGSGG…LLDAVNNKFD (557 aa)) are Cytoplasmic-facing. The disordered stretch occupies residues 167-187 (GGPGGIMSFGRSKAKPADPKQ). 233-240 (GPPGTGKT) serves as a coordination point for ATP. His455 contacts Zn(2+). The active site involves Glu456. Residues His459 and Asp531 each coordinate Zn(2+).

This sequence in the central section; belongs to the AAA ATPase family. In the C-terminal section; belongs to the peptidase M41 family. As to quaternary structure, homohexamer. It depends on Zn(2+) as a cofactor.

Its subcellular location is the cell membrane. Its function is as follows. Acts as a processive, ATP-dependent zinc metallopeptidase for both cytoplasmic and membrane proteins. Plays a role in the quality control of integral membrane proteins. In terms of biological role, can complement an E.coli ftsH disruption mutant. In Oenococcus oeni (Leuconostoc oenos), this protein is ATP-dependent zinc metalloprotease FtsH.